The chain runs to 212 residues: Peptide methionine sulfoxide reductase MsrA (212 aa).

Residue Cys-52 is part of the active site.

The protein belongs to the MsrA Met sulfoxide reductase family.

It catalyses the reaction L-methionyl-[protein] + [thioredoxin]-disulfide + H2O = L-methionyl-(S)-S-oxide-[protein] + [thioredoxin]-dithiol. The catalysed reaction is [thioredoxin]-disulfide + L-methionine + H2O = L-methionine (S)-S-oxide + [thioredoxin]-dithiol. In terms of biological role, has an important function as a repair enzyme for proteins that have been inactivated by oxidation. Catalyzes the reversible oxidation-reduction of methionine sulfoxide in proteins to methionine. This Escherichia coli O6:K15:H31 (strain 536 / UPEC) protein is Peptide methionine sulfoxide reductase MsrA.